The primary structure comprises 607 residues: CUB and zona pellucida-like domain-containing protein 1 (607 aa).

An N-terminal signal peptide occupies residues 1 to 19 (MEVTGRLFIWAILAVSCRA). Over 20 to 568 (QLNSTAAEGR…AEISKQPLSH (549 aa)) the chain is Lumenal. N-linked (GlcNAc...) asparagine glycosylation is present at Asn22. Residues Cys32 and Cys58 are joined by a disulfide bond. 2 consecutive CUB domains span residues 32–146 (CTAS…YFFS) and 154–265 (CGGY…YAST). Asn67 carries N-linked (GlcNAc...) asparagine glycosylation. Cystine bridges form between Cys85–Cys107 and Cys154–Cys180. Residue Asn195 is glycosylated (N-linked (GlcNAc...) asparagine). A disulfide bond links Cys207 and Cys229. A ZP domain is found at 276–519 (SCASDKMRVI…SRCNQGCVSR (244 aa)). The N-linked (GlcNAc...) asparagine glycan is linked to Asn419. Cysteines 442 and 498 form a disulfide. The chain crosses the membrane as a helical span at residues 569–589 (LHLFSFMVLALNVVIVVTATV). Residues 590–607 (RHFLNRWKDHGYQKLQVY) are Cytoplasmic-facing.

As to expression, expressed predominantly in epithelium of uterus and oviduct.

The protein resides in the zymogen granule membrane. Localized to zymogen granules, where it functions in trypsinogen activation. May indirectly regulate cell motility, cell-cell and cell/extracellular matrix interactions. The polypeptide is CUB and zona pellucida-like domain-containing protein 1 (Rattus norvegicus (Rat)).